The following is a 129-amino-acid chain: RxLR effector protein PexRD43 (129 aa).

Positions 1–16 (MRLAMILLSIPLFVSG) are cleaved as a signal peptide. A RxLR-dEER motif is present at residues 44–56 (RSLRTSGEANEER).

The protein belongs to the RxLR effector family.

It is found in the secreted. Its subcellular location is the host cytoplasm. It localises to the host nucleus. Functionally, effector that enhances P.infestans colonization of Nicotiana benthamiana leaves. The protein is RxLR effector protein PexRD43 of Phytophthora infestans (strain T30-4) (Potato late blight agent).